The sequence spans 520 residues: Ubiquitin carboxyl-terminal hydrolase 3 (520 aa).

Position 1 is an N-acetylmethionine (Met1). A UBP-type zinc finger spans residues 1–121; it reads MECPHLSSSV…QKVREHLQNL (121 aa). Zn(2+)-binding residues include Cys3, His5, Cys29, Cys32, Cys41, Cys44, Cys49, His56, His60, His82, Cys95, and Cys98. One can recognise a USP domain in the interval 159-511; that stretch reads TGLRNLGNTC…KAYILFYVER (353 aa). Cys168 serves as the catalytic Nucleophile. His471 functions as the Proton acceptor in the catalytic mechanism.

This sequence belongs to the peptidase C19 family. USP3 subfamily. Interacts (via UBP-type domain) with H2A; the interaction is less efficient than with monoubiquitinated H2A.

It is found in the nucleus. It localises to the cytoplasm. It catalyses the reaction Thiol-dependent hydrolysis of ester, thioester, amide, peptide and isopeptide bonds formed by the C-terminal Gly of ubiquitin (a 76-residue protein attached to proteins as an intracellular targeting signal).. Deubiquitinase that plays a role in several cellular processes including transcriptional regulation, cell cycle progression or innate immunity. In response to DNA damage, deubiquitinates monoubiquitinated target proteins such as histone H2A and H2AX and thereby counteracts RNF168- and RNF8-mediated ubiquitination. In turn, participates in the recruitment of DNA damage repair factors to DNA break sites. Required for proper progression through S phase and subsequent mitotic entry. Acts as a positive regulator of TP53 by deubiquitinating and stabilizing it to promote normal cell proliferation and transformation. Participates in establishing tolerance innate immune memory through non-transcriptional feedback. Mechanistically, negatively regulates TLR-induced NF-kappa-B signaling by targeting and removing the 'Lys-63'-linked polyubiquitin chains on MYD88. Negatively regulates the activation of type I interferon signaling by mediating 'Lys-63'-linked polyubiquitin chains on RIGI and IFIH1. Also deubiquinates ASC/PYCARD, the central adapter mediating the assembly and activation of most inflammasomes, and thereby promotes inflammasome activation. The protein is Ubiquitin carboxyl-terminal hydrolase 3 (Usp3) of Mus musculus (Mouse).